The chain runs to 335 residues: Methionine import ATP-binding protein MetN 1 (335 aa).

One can recognise an ABC transporter domain in the interval 2-242 (IEFHNVHKTY…PQHPTTRRFV (241 aa)). 38–45 (GHSGAGKS) contacts ATP.

The protein belongs to the ABC transporter superfamily. Methionine importer (TC 3.A.1.24) family. As to quaternary structure, the complex is composed of two ATP-binding proteins (MetN), two transmembrane proteins (MetI) and a solute-binding protein (MetQ).

Its subcellular location is the cell inner membrane. It catalyses the reaction L-methionine(out) + ATP + H2O = L-methionine(in) + ADP + phosphate + H(+). The enzyme catalyses D-methionine(out) + ATP + H2O = D-methionine(in) + ADP + phosphate + H(+). Its function is as follows. Part of the ABC transporter complex MetNIQ involved in methionine import. Responsible for energy coupling to the transport system. The polypeptide is Methionine import ATP-binding protein MetN 1 (Pseudomonas savastanoi pv. phaseolicola (strain 1448A / Race 6) (Pseudomonas syringae pv. phaseolicola (strain 1448A / Race 6))).